A 363-amino-acid polypeptide reads, in one-letter code: GTP-binding protein 1 (363 aa).

The OBG-type G domain occupies A63 to N287. GTP contacts are provided by residues G69–S76, D115–I119, and K246–A249. The 76-residue stretch at N287–T362 folds into the TGS domain.

Belongs to the TRAFAC class OBG-HflX-like GTPase superfamily. OBG GTPase family.

This is GTP-binding protein 1 (gtp1) from Schizosaccharomyces pombe (strain 972 / ATCC 24843) (Fission yeast).